A 286-amino-acid chain; its full sequence is tRNA (guanine-N(7)-)-methyltransferase (286 aa).

The interval 1–22 (MGRARPKSQKRGDYRVSRSQEN) is disordered. Residues glycine 104, 127 to 128 (EI), 162 to 163 (NS), and cysteine 182 each bind S-adenosyl-L-methionine. Aspartate 185 is an active-site residue. S-adenosyl-L-methionine is bound at residue 260 to 262 (TEE).

Belongs to the class I-like SAM-binding methyltransferase superfamily. TrmB family. Forms a complex with TRM82.

The protein localises to the nucleus. It carries out the reaction guanosine(46) in tRNA + S-adenosyl-L-methionine = N(7)-methylguanosine(46) in tRNA + S-adenosyl-L-homocysteine. Its pathway is tRNA modification; N(7)-methylguanine-tRNA biosynthesis. Catalyzes the formation of N(7)-methylguanine at position 46 (m7G46) in tRNA. The polypeptide is tRNA (guanine-N(7)-)-methyltransferase (Colletotrichum orbiculare (strain 104-T / ATCC 96160 / CBS 514.97 / LARS 414 / MAFF 240422) (Cucumber anthracnose fungus)).